Reading from the N-terminus, the 86-residue chain is MAVRLWVVALALAALFIVDREVPVSAEKQVFSRMPICEHMTESPDCSRIYDPVCGTDGVTYESECKLCLARIENKQDIQIVKDGEC.

The N-terminal stretch at 1 to 26 (MAVRLWVVALALAALFIVDREVPVSA) is a signal peptide. Positions 31 to 86 (FSRMPICEHMTESPDCSRIYDPVCGTDGVTYESECKLCLARIENKQDIQIVKDGEC) constitute a Kazal-like domain. 3 cysteine pairs are disulfide-bonded: Cys37-Cys68, Cys46-Cys65, and Cys54-Cys86.

Synthesized in duodenal goblet cells and in monocytes in bone marrow and blood.

Its subcellular location is the secreted. Functionally, inhibits the glucose-induced insulin secretion from perfused pancreas; also plays a role in the immune system. Does not inhibit trypsin. This chain is Serine protease inhibitor Kazal-type 4 (SPINK4), found in Sus scrofa (Pig).